A 522-amino-acid chain; its full sequence is MEELQGYLEKGESRQQHFLYPLLFQEYIYALAHDYSLNSSIFYEPMEIFGYDNKSSLALVKRLIIRIYQQNSLISSVNDSNQNRLLWHNHFFYSHFYSQMISESFGILVEIPFSLRLVSYFEEIEISKYXNLRSIHSIFPFLEDKLSHLNYVSDILIPHPIHMEILVQILQCWIQDVPFLHFLQFFLREYHNWNSLLITQKKSIYVFSKENKRLFRLLYNSYAFECEFLFXFIRXQSYYLRXISYGTFLERTHFYGKIEHLQIEHFIFIVVCRNYFHRTLWLFKDSFMHYVRYEGKAILASKGTGTPLLMKKWKYLFFHFWQYYFHFWSQPYRIHISPLSKHSFYFLGYLSSLLRNFLAVRNQMLDNSFLTDTIIKKLDTTVPVILLIGSLSKAKFCTVSGHPISKPIWADLPDSDILDQFGRICKNLSHYHSGSSKKRDLYRIKYILRLSCARTLARKHKSTVRTFLRRLGSGLLEEFFTEEEQVLSLIFPKTTPFILHGSHRERIWYLDIIRINDLVNYS.

This sequence belongs to the intron maturase 2 family. MatK subfamily.

Its subcellular location is the plastid. It is found in the chloroplast. Usually encoded in the trnK tRNA gene intron. Probably assists in splicing its own and other chloroplast group II introns. The polypeptide is Maturase K (Dianella ensifolia (Flax lily)).